The primary structure comprises 106 residues: Small ribosomal subunit protein bS16 (106 aa).

This sequence belongs to the bacterial ribosomal protein bS16 family.

This is Small ribosomal subunit protein bS16 from Wolbachia pipientis wMel.